The chain runs to 401 residues: Heat stress transcription factor A-4a (401 aa).

Residues 13–107 (LPPFLTKTYE…LMKNIHRRKP (95 aa)) mediate DNA binding. The tract at residues 122-188 (PLTDSERVRM…TMVSFVSQVL (67 aa)) is hydrophobic repeat HR-A/B. A Nuclear localization signal motif is present at residues 207–213 (RKRRFPR). An AHA1 motif is present at residues 256-265 (IAIWENLVSD). Residues 341 to 350 (DGFWQQFFSE) carry the AHA2 motif. Residues 351–373 (NPGSTEQREVQLERKDDKDKAGV) are disordered. The segment covering 356 to 373 (EQREVQLERKDDKDKAGV) has biased composition (basic and acidic residues). The short motif at 388 to 395 (ITEQLGHL) is the Nuclear export signal element.

It belongs to the HSF family. Class A subfamily. Homotrimer. Exhibits temperature-dependent phosphorylation.

It localises to the cytoplasm. The protein localises to the nucleus. Its function is as follows. Transcriptional activator that specifically binds DNA sequence 5'-AGAAnnTTCT-3' known as heat shock promoter elements (HSE). The protein is Heat stress transcription factor A-4a (HSFA4A) of Arabidopsis thaliana (Mouse-ear cress).